The chain runs to 677 residues: Fermitin family homolog 1 (677 aa).

The FERM domain occupies 96–653; it reads MLRLRLPNLK…HEYIGGYIFL (558 aa). A phosphoserine mark is found at S170, S179, and S361. One can recognise a PH domain in the interval 377 to 473; it reads KLFRPKKLLP…WMAACMLASK (97 aa).

The protein belongs to the kindlin family. Interacts with the cytoplasmic domain of integrins ITGB1 and ITGB3. Expressed in brain, skeletal muscle, kidney, colon, adrenal gland, prostate, and placenta. Weakly or not expressed in heart, thymus, spleen, liver, small intestine, bone marrow, lung and peripheral blood leukocytes. Overexpressed in some colon and lung tumors. In skin, it is localized within the epidermis and particularly in basal keratocytes. Not detected in epidermal melanocytes and dermal fibroblasts.

It localises to the cytoplasm. Its subcellular location is the cytoskeleton. The protein resides in the cell junction. It is found in the focal adhesion. The protein localises to the cell projection. It localises to the ruffle membrane. In terms of biological role, involved in cell adhesion. Contributes to integrin activation. When coexpressed with talin, potentiates activation of ITGA2B. Required for normal keratinocyte proliferation. Required for normal polarization of basal keratinocytes in skin, and for normal cell shape. Required for normal adhesion of keratinocytes to fibronectin and laminin, and for normal keratinocyte migration to wound sites. May mediate TGF-beta 1 signaling in tumor progression. In Homo sapiens (Human), this protein is Fermitin family homolog 1 (FERMT1).